A 525-amino-acid chain; its full sequence is Probable feruloyl esterase B-1 (525 aa).

The N-terminal stretch at 1–20 (MMRWFLLIGLASAAATDSSA) is a signal peptide. 6 disulfide bridges follow: C26–C75, C61–C114, C187–C442, C256–C273, C282–C292, and C502–C524. N-linked (GlcNAc...) asparagine glycans are attached at residues N51, N80, and N98. The active-site Acyl-ester intermediate is S188. Residues D257, D260, A262, and D264 each coordinate Ca(2+). 3 N-linked (GlcNAc...) asparagine glycosylation sites follow: N283, N288, and N351. Catalysis depends on charge relay system residues D401 and H441.

It belongs to the tannase family.

It is found in the secreted. It catalyses the reaction feruloyl-polysaccharide + H2O = ferulate + polysaccharide.. Functionally, involved in degradation of plant cell walls. Hydrolyzes the feruloyl-arabinose ester bond in arabinoxylans as well as the feruloyl-galactose and feruloyl-arabinose ester bonds in pectin. The protein is Probable feruloyl esterase B-1 (faeB-1) of Neosartorya fischeri (strain ATCC 1020 / DSM 3700 / CBS 544.65 / FGSC A1164 / JCM 1740 / NRRL 181 / WB 181) (Aspergillus fischerianus).